The sequence spans 173 residues: Lactoylglutathione lyase (173 aa).

Residues valine 24–proline 170 form the VOC domain. Histidine 27 is a Ni(2+) binding site. Residue arginine 31 participates in substrate binding. Glutamate 93 is a Ni(2+) binding site. Asparagine 97, arginine 116, and histidine 120 together coordinate substrate. Ni(2+)-binding residues include histidine 120 and glutamate 166. Glutamate 166 serves as the catalytic Proton donor/acceptor.

Belongs to the glyoxalase I family. Monomer. Ni(2+) is required as a cofactor. It depends on Zn(2+) as a cofactor.

It catalyses the reaction (R)-S-lactoylglutathione = methylglyoxal + glutathione. It participates in secondary metabolite metabolism; methylglyoxal degradation; (R)-lactate from methylglyoxal: step 1/2. Its function is as follows. Catalyzes the conversion of hemimercaptal, formed from methylglyoxal and glutathione, to S-lactoylglutathione. This is Lactoylglutathione lyase (gloA) from Pseudomonas putida (Arthrobacter siderocapsulatus).